Consider the following 155-residue polypeptide: Fibroblast growth factor 1 (155 aa).

Ala2 is modified (N-acetylalanine). A propeptide spanning residues 2 to 15 (AEGEITTFAALTER) is cleaved from the precursor. Asn33 is a heparin binding site. The segment at 127–143 (KKNGSCKRGPRTHYGQK) is heparin-binding.

The protein belongs to the heparin-binding growth factors family. As to quaternary structure, monomer. Homodimer. Interacts with FGFR1, FGFR2, FGFR3 and FGFR4. Affinity between fibroblast growth factors (FGFs) and their receptors is increased by heparan sulfate glycosaminoglycans that function as coreceptors. Found in a complex with FGFBP1, FGF1 and FGF2. Interacts with FGFBP1. Part of a Cu(2+)-dependent multiprotein aggregate containing FGF1, S100A13 and SYT1. Interacts with SYT1. Interacts with S100A13. Interacts with LRRC59. Interacts with CSNKA, CSNKB and FIBP. While binding with LRRC59, CSNKA and FIBP seem mutually exclusive, CSNKB and FIBP may cooperatively interact with FGF1. Forms a ternary complex with FGFR1 and ITGAV:ITGB3 and induces the recruitment of PTPN11 to the complex. In terms of processing, in the nucleus, phosphorylated by PKC/PRKCD.

The protein resides in the secreted. Its subcellular location is the cytoplasm. It is found in the cell cortex. The protein localises to the cytosol. It localises to the nucleus. Plays an important role in the regulation of cell survival, cell division, angiogenesis, cell differentiation and cell migration. Functions as a potent mitogen in vitro. Acts as a ligand for FGFR1 and integrins. Binds to FGFR1 in the presence of heparin leading to FGFR1 dimerization and activation via sequential autophosphorylation on tyrosine residues which act as docking sites for interacting proteins, leading to the activation of several signaling cascades. Binds to integrin ITGAV:ITGB3. Its binding to integrin, subsequent ternary complex formation with integrin and FGFR1, and the recruitment of PTPN11 to the complex are essential for FGF1 signaling. Induces the phosphorylation and activation of FGFR1, FRS2, MAPK3/ERK1, MAPK1/ERK2 and AKT1. Can induce angiogenesis. The protein is Fibroblast growth factor 1 (Fgf1) of Mus musculus (Mouse).